A 150-amino-acid chain; its full sequence is Catabolic 3-dehydroquinase (150 aa).

Tyrosine 24 (proton acceptor) is an active-site residue. Residues asparagine 75, histidine 81, and aspartate 88 each contribute to the substrate site. Residue histidine 101 is the Proton donor of the active site. Substrate contacts are provided by residues 102 to 103 (IS) and arginine 112.

Belongs to the type-II 3-dehydroquinase family. Homododecamer. Adopts a ring-like structure, composed of an arrangement of two hexameric rings stacked on top of one another.

It carries out the reaction 3-dehydroquinate = 3-dehydroshikimate + H2O. Its pathway is aromatic compound metabolism; 3,4-dihydroxybenzoate biosynthesis; 3,4-dihydroxybenzoate from 3-dehydroquinate: step 1/2. Its function is as follows. Is involved in the catabolism of quinate. Allows the utilization of quinate as carbon source via the beta-ketoadipate pathway. The sequence is that of Catabolic 3-dehydroquinase from Verticillium alfalfae (strain VaMs.102 / ATCC MYA-4576 / FGSC 10136) (Verticillium wilt of alfalfa).